Here is a 324-residue protein sequence, read N- to C-terminus: MSWLTPELIEILITVGKAVVILLVVVTCGAFMSMGERRLLGLFQGRYGPNRVGWGGSLQLVADMIKMFFKEDWVPNFTDKVIFTLAPMIAFTSMLIAFAIVPITPTWGVADLNIGILFFLMMAGLAVYAVLFAGWASNNKYSLLGAVRASAQTVSYEVFIGLSLMGVVAQAGSFNMRDIVDSQEHLWNVIPQFFGFITFAIAGVAVCHRHPFDQPEAEQELADGYHIEYSGMKFGLFFVGEYIGIVTVSALMVTLFFGGWHGPFLPPFVWFALKTGFFMMMFILIRASLPRPRYDQVMAFGWKVCLPITLLNLLATAAVILYNA.

The next 8 membrane-spanning stretches (helical) occupy residues 11-31 (ILIT…CGAF), 81-101 (VIFT…FAIV), 114-134 (IGIL…LFAG), 154-174 (VSYE…AGSF), 186-206 (LWNV…GVAV), 237-257 (FFVG…TLFF), 265-285 (LPPF…FILI), and 304-324 (VCLP…LYNA).

This sequence belongs to the complex I subunit 1 family. NDH-1 is composed of 13 different subunits. Subunits NuoA, H, J, K, L, M, N constitute the membrane sector of the complex.

It is found in the cell inner membrane. It carries out the reaction a quinone + NADH + 5 H(+)(in) = a quinol + NAD(+) + 4 H(+)(out). In terms of biological role, NDH-1 shuttles electrons from NADH, via FMN and iron-sulfur (Fe-S) centers, to quinones in the respiratory chain. The immediate electron acceptor for the enzyme in this species is believed to be ubiquinone. Couples the redox reaction to proton translocation (for every two electrons transferred, four hydrogen ions are translocated across the cytoplasmic membrane), and thus conserves the redox energy in a proton gradient. This subunit may bind ubiquinone. The chain is NADH-quinone oxidoreductase subunit H from Pectobacterium atrosepticum (strain SCRI 1043 / ATCC BAA-672) (Erwinia carotovora subsp. atroseptica).